Reading from the N-terminus, the 390-residue chain is Succinate--CoA ligase [ADP-forming] subunit beta (390 aa).

Residues 9 to 245 enclose the ATP-grasp domain; sequence KHLLKKYNIP…TTQEDEHETM (237 aa). Residues lysine 46, 53-55, glutamate 99, serine 102, and glutamate 107 contribute to the ATP site; that span reads GRG. Mg(2+) is bound by residues asparagine 200 and aspartate 214. Residues asparagine 265 and 322–324 contribute to the substrate site; that span reads GIV.

It belongs to the succinate/malate CoA ligase beta subunit family. As to quaternary structure, heterotetramer of two alpha and two beta subunits. It depends on Mg(2+) as a cofactor.

It carries out the reaction succinate + ATP + CoA = succinyl-CoA + ADP + phosphate. The catalysed reaction is GTP + succinate + CoA = succinyl-CoA + GDP + phosphate. It functions in the pathway carbohydrate metabolism; tricarboxylic acid cycle; succinate from succinyl-CoA (ligase route): step 1/1. Functionally, succinyl-CoA synthetase functions in the citric acid cycle (TCA), coupling the hydrolysis of succinyl-CoA to the synthesis of either ATP or GTP and thus represents the only step of substrate-level phosphorylation in the TCA. The beta subunit provides nucleotide specificity of the enzyme and binds the substrate succinate, while the binding sites for coenzyme A and phosphate are found in the alpha subunit. The protein is Succinate--CoA ligase [ADP-forming] subunit beta of Coxiella burnetii (strain RSA 493 / Nine Mile phase I).